Here is an 810-residue protein sequence, read N- to C-terminus: MPEKPYDHIAIELKWHERWQDAQFYKAEENSAKPKFYVLEMLPYPSGTLHIGHIRNYSIGDALARYKWMRGFNVLHPMGWDAFGLPAENAAIANKVPPRQWTLQNIAAMKKTHRRFAFSYDWDREVSTCEPEYYRWNQWFFLRMLERGLAYRKRALVNWCPKCATVLANEQVVDGCCWRHEGTPVEQRALDQWFLKITDYADQLLDEMARLEGGWPERVLTMQRNWIGRSEGAEIDFTLAGAGTPIRVFTTRVDTIYGATSVILAPEHPLNETLLDSEKKAKAKAMVDSRAGRDPGDIDKEGFFTGHYAVNPYNGEQVPIWIANFVLMGYGTGAIMAVPAHDERDFEFCTKYGIPITPVIRPVDQPAGEPVALPYGEYGILENSGEWSGLASAEARRQMSAYAEQHGFGKSAITFRIKDWGISRQRYWGTPIPVIHCPSCGVVPVPDDQLPVVLPDRIEITGAGRSPLENVPEFVNVACPKCGEPARRETDTMDTFVDSSWYFYRYCDPHNSERPFDPAKIAYWFEIDQYIGGIEHAILHLIYSRFFTKVMRDIGLISNNEPARRLFTQGMVIAEGAKMSKSKGNVVGADLLADKFGADTARMFVLSNVPPEKEVDWREEGAEGTYRFLGRVYRFTTRNVPAQQRSGDADRKVVRKLHQTLKKITEDFETRWHFNTCIASIMELVNLLYAEEQNISAAVMPQILESLALMLAPFAPYLSQEMWEEIGKEGPVFRQAWPAFDPELAKEEGAEIVVQVNGKVRTRITAPFGTAKEELESRSLAHEKVKPFIDGKQVMKIITVPDKLVNIVVK.

The short motif at 43-53 (PYPSGTLHIGH) is the 'HIGH' region element. The 'KMSKS' region signature appears at 578–582 (KMSKS). ATP is bound at residue Lys581.

It belongs to the class-I aminoacyl-tRNA synthetase family.

It localises to the cytoplasm. The enzyme catalyses tRNA(Leu) + L-leucine + ATP = L-leucyl-tRNA(Leu) + AMP + diphosphate. The sequence is that of Leucine--tRNA ligase from Solibacter usitatus (strain Ellin6076).